Consider the following 351-residue polypeptide: Minor outer capsid protein P9 (351 aa).

The disordered stretch occupies residues 245-310 (GGVPAALPQP…VPSGNVSARG (66 aa)). The segment covering 285–297 (MIRKKVETSKDGP) has biased composition (basic and acidic residues).

It belongs to the phytoreovirus minor outer capsid protein P9 family.

It is found in the virion. It localises to the host cytoplasm. Functionally, minor outer capsid protein. The protein is Minor outer capsid protein P9 of Rice dwarf virus (isolate Akita) (RDV).